Here is a 508-residue protein sequence, read N- to C-terminus: Octopamine receptor beta-1R (508 aa).

Topologically, residues 1-111 (MTLLQRLQAM…SHLALVFVKC (111 aa)) are extracellular. Residues 112 to 132 (FIIGFIILAAILGNMLVIVSV) traverse the membrane as a helical segment. At 133–139 (MRHRKLR) the chain is on the cytoplasmic side. A helical transmembrane segment spans residues 140 to 160 (IITNYFVVSLAVADMLVALCA). Residues 161 to 186 (MTFNASVMISGKWMFGSVMCDMWNSF) are Extracellular-facing. The N-linked (GlcNAc...) asparagine glycan is linked to N164. A helical transmembrane segment spans residues 187–209 (DVYFSTASIMHLCCISVDRYYAI). Topologically, residues 210–223 (VQPLDYPLIMTQRR) are cytoplasmic. The chain crosses the membrane as a helical span at residues 224–244 (VFIMLLMVWLSPALLSFLPIC). Residues 245–270 (SGWYTTTENYKYLKSNPHICEFKVNK) lie on the Extracellular side of the membrane. A helical membrane pass occupies residues 271-291 (AYAIVSSSMSFWIPGIVMLSM). At 292–351 (YYRIYQEADRQERLVYRSKVAALLLEKHLQISQIPKPRPSIQVEQSTISTMRRERKAART) the chain is on the cytoplasmic side. The chain crosses the membrane as a helical span at residues 352–372 (LGIIMSAFLICWLPFFLWYIV). Over 373 to 383 (SSLCDSCITPR) the chain is Extracellular. A helical membrane pass occupies residues 384-404 (LLVGILFWIGYFNSALNPIIY). Residues 405–508 (AYFNRDFRAA…MQQLHPLYTN (104 aa)) are Cytoplasmic-facing. Residues 440–464 (RDLEFGGPSRRGTNGAQRTGSGSAE) are disordered. The segment covering 450–461 (RGTNGAQRTGSG) has biased composition (polar residues).

Belongs to the G-protein coupled receptor 1 family. In the adult, expressed in the superior protocerebrum and the optic lobe medulla of the central nervous system, nurse cells of egg chambers in the ovary at oogenic stages 1-10, and spermatogonia and spermatocytes in the testis. Expressed in embryonic and larval ventral nerve cord and brain lobe, and the larval imaginal disk and larval salivary gland. Also expressed in larval synaptic boutons and retinal cells in the optic disk.

Its subcellular location is the cell membrane. Its function is as follows. Autoreceptor for octopamine, which is a neurotransmitter, neurohormone, and neuromodulator in invertebrates. Negatively regulates synaptic growth by activating the inhibitory G protein Galphao and limiting cAMP production. Antagonizes the action of Octbeta2R which stimulates synaptic growth. In Drosophila melanogaster (Fruit fly), this protein is Octopamine receptor beta-1R.